The primary structure comprises 264 residues: Thymidylate synthase (264 aa).

Residue R21 participates in dUMP binding. H51 contacts (6R)-5,10-methylene-5,6,7,8-tetrahydrofolate. 126-127 (RR) serves as a coordination point for dUMP. Residue C146 is the Nucleophile of the active site. DUMP-binding positions include 166-169 (RSCD), N177, and 207-209 (HLY). Residue D169 participates in (6R)-5,10-methylene-5,6,7,8-tetrahydrofolate binding. A (6R)-5,10-methylene-5,6,7,8-tetrahydrofolate-binding site is contributed by A263.

The protein belongs to the thymidylate synthase family. Bacterial-type ThyA subfamily. Homodimer.

The protein localises to the cytoplasm. The enzyme catalyses dUMP + (6R)-5,10-methylene-5,6,7,8-tetrahydrofolate = 7,8-dihydrofolate + dTMP. Its pathway is pyrimidine metabolism; dTTP biosynthesis. Functionally, catalyzes the reductive methylation of 2'-deoxyuridine-5'-monophosphate (dUMP) to 2'-deoxythymidine-5'-monophosphate (dTMP) while utilizing 5,10-methylenetetrahydrofolate (mTHF) as the methyl donor and reductant in the reaction, yielding dihydrofolate (DHF) as a by-product. This enzymatic reaction provides an intracellular de novo source of dTMP, an essential precursor for DNA biosynthesis. The chain is Thymidylate synthase from Escherichia fergusonii (strain ATCC 35469 / DSM 13698 / CCUG 18766 / IAM 14443 / JCM 21226 / LMG 7866 / NBRC 102419 / NCTC 12128 / CDC 0568-73).